Consider the following 210-residue polypeptide: MADAKELKSVLIGPIVSNNPIALQILGVCSALAVTSKMETALVMTIALTAVCALSNLFISLIRNHIPSSVRIIVQMTIIASLVIVVDQVLQAYAYDVAKQLSVFVGLIITNCIVMGRAEAFAMKTPPMMSFMDGLGNGLGYGAILLSVGFVRELFGNGSLFGIEILSKISDGGWYQPNGLLLLPPSAFFLIGALIWIIRVMKPEQVEAKG.

6 consecutive transmembrane segments (helical) span residues 9–29, 42–62, 72–92, 103–123, 131–151, and 178–198; these read SVLI…LGVC, LVMT…ISLI, IIVQ…VLQA, VFVG…AFAM, FMDG…VGFV, and NGLL…IWII.

Belongs to the NqrDE/RnfAE family. In terms of assembly, composed of six subunits; NqrA, NqrB, NqrC, NqrD, NqrE and NqrF.

It localises to the cell inner membrane. The catalysed reaction is a ubiquinone + n Na(+)(in) + NADH + H(+) = a ubiquinol + n Na(+)(out) + NAD(+). Functionally, NQR complex catalyzes the reduction of ubiquinone-1 to ubiquinol by two successive reactions, coupled with the transport of Na(+) ions from the cytoplasm to the periplasm. NqrA to NqrE are probably involved in the second step, the conversion of ubisemiquinone to ubiquinol. In Shewanella piezotolerans (strain WP3 / JCM 13877), this protein is Na(+)-translocating NADH-quinone reductase subunit D.